Reading from the N-terminus, the 273-residue chain is Shikimate dehydrogenase (NADP(+)) (273 aa).

Shikimate is bound by residues 14-16 (SLS) and Thr59. Residue Lys63 is the Proton acceptor of the active site. 2 residues coordinate shikimate: Asn84 and Asp99. NADP(+)-binding positions include 122 to 126 (GAGGA) and Met212. Tyr214 provides a ligand contact to shikimate. Position 235 (Gly235) interacts with NADP(+).

It belongs to the shikimate dehydrogenase family. In terms of assembly, homodimer.

The enzyme catalyses shikimate + NADP(+) = 3-dehydroshikimate + NADPH + H(+). Its pathway is metabolic intermediate biosynthesis; chorismate biosynthesis; chorismate from D-erythrose 4-phosphate and phosphoenolpyruvate: step 4/7. Functionally, involved in the biosynthesis of the chorismate, which leads to the biosynthesis of aromatic amino acids. Catalyzes the reversible NADPH linked reduction of 3-dehydroshikimate (DHSA) to yield shikimate (SA). This Aeropyrum pernix (strain ATCC 700893 / DSM 11879 / JCM 9820 / NBRC 100138 / K1) protein is Shikimate dehydrogenase (NADP(+)).